The primary structure comprises 120 residues: uncharacterized protein (120 aa).

The chain crosses the membrane as a helical span at residues 19-41 (YPELFITWCVMTYTFGVAGYMLG). The tract at residues 57-78 (SKNAHPWEDTKSSSGKSDESLD) is disordered. Over residues 61–75 (HPWEDTKSSSGKSDE) the composition is skewed to basic and acidic residues.

It localises to the membrane. This is an uncharacterized protein from Schizosaccharomyces pombe (strain 972 / ATCC 24843) (Fission yeast).